The following is a 415-amino-acid chain: Putative competence-damage inducible protein (415 aa).

The protein belongs to the CinA family.

The sequence is that of Putative competence-damage inducible protein from Listeria innocua serovar 6a (strain ATCC BAA-680 / CLIP 11262).